We begin with the raw amino-acid sequence, 453 residues long: tRNA modification GTPase MnmE (453 aa).

Positions 22, 79, and 119 each coordinate (6S)-5-formyl-5,6,7,8-tetrahydrofolate. The 162-residue stretch at 215-376 (GMKVVIAGRP…LKQHLKSLMG (162 aa)) folds into the TrmE-type G domain. Asn-225 contacts K(+). Residues 225–230 (NAGKSS), 244–250 (TEIAGTT), 269–272 (DTAG), and 334–337 (NKAD) contribute to the GTP site. Ser-229 is a Mg(2+) binding site. 3 residues coordinate K(+): Thr-244, Ile-246, and Thr-249. Thr-250 provides a ligand contact to Mg(2+). Residue Lys-453 coordinates (6S)-5-formyl-5,6,7,8-tetrahydrofolate.

This sequence belongs to the TRAFAC class TrmE-Era-EngA-EngB-Septin-like GTPase superfamily. TrmE GTPase family. Homodimer. Heterotetramer of two MnmE and two MnmG subunits. Requires K(+) as cofactor.

The protein resides in the cytoplasm. Exhibits a very high intrinsic GTPase hydrolysis rate. Involved in the addition of a carboxymethylaminomethyl (cmnm) group at the wobble position (U34) of certain tRNAs, forming tRNA-cmnm(5)s(2)U34. The polypeptide is tRNA modification GTPase MnmE (Shewanella baltica (strain OS185)).